A 192-amino-acid polypeptide reads, in one-letter code: Peptidyl-tRNA hydrolase (192 aa).

Tyrosine 18 is a binding site for tRNA. Histidine 23 acts as the Proton acceptor in catalysis. 3 residues coordinate tRNA: phenylalanine 69, asparagine 71, and asparagine 117.

It belongs to the PTH family. Monomer.

The protein resides in the cytoplasm. It carries out the reaction an N-acyl-L-alpha-aminoacyl-tRNA + H2O = an N-acyl-L-amino acid + a tRNA + H(+). In terms of biological role, hydrolyzes ribosome-free peptidyl-tRNAs (with 1 or more amino acids incorporated), which drop off the ribosome during protein synthesis, or as a result of ribosome stalling. Its function is as follows. Catalyzes the release of premature peptidyl moieties from peptidyl-tRNA molecules trapped in stalled 50S ribosomal subunits, and thus maintains levels of free tRNAs and 50S ribosomes. The chain is Peptidyl-tRNA hydrolase from Neisseria gonorrhoeae (strain ATCC 700825 / FA 1090).